Here is a 526-residue protein sequence, read N- to C-terminus: Rho guanine nucleotide exchange factor 3 (526 aa).

A disordered region spans residues 20 to 40; the sequence is ELPPASGPAKDAEEPSNKRVK. Phosphoserine is present on residues Ser-47 and Ser-70. The DH domain occupies 122-304; that stretch reads KRQEAIFELS…QGIVAEINTK (183 aa). The PH domain maps to 291-449; the sequence is INIIQGIVAE…WLNCIRQAKE (159 aa). A disordered region spans residues 464-526; that stretch reads EGSFLNPTTG…GNSRHGESNV (63 aa). Residues 466-475 are compositionally biased toward polar residues; sequence SFLNPTTGSR.

Interacts with RHOA and RHOB. As to expression, widely expressed. Highest levels are found in adult brain and skeletal muscle. Lower levels are found in heart and kidney.

The protein localises to the cytoplasm. Its function is as follows. Acts as a guanine nucleotide exchange factor (GEF) for RhoA and RhoB GTPases. The polypeptide is Rho guanine nucleotide exchange factor 3 (ARHGEF3) (Homo sapiens (Human)).